A 734-amino-acid polypeptide reads, in one-letter code: MASRFPKFSQGLAQDPTTRRIWFGIATAHDFESHDDMTEEKLYQKIFASHFGQLAIIFLWTSGNLFHVAWQGNFEAWSQDPLHIRPIAHAIWDPHFGQPAVEAYTRGGASGPVNISYSGVYQWWYTIGLRTNQDLYTGSLFLLGLAAVALVAGWLHLQPKWKPSVSWFKNAESRLNHHLSGLFGVSSLAWTGHLIHVAIPEARGQHVRWDNFLSVAPHPQGLAPFFAGQWGVYAQDPDSSSHLFGTAQGSGTAILTFLGGFHPQTQSLWLTDIAHHHLAIAVLFIVAGHMYRTNFGIGHSMKEILEAHVPPGGGLGRGHQGLYDTVNNSLHFQLGLALACLGVITSLVAQHIYSLPPYAFLAQDFTTQAALYTHHQYIAGFIMTGAFAHGAIFFIRDYNPEQNKGNVLARMLEHKEAIISHLSWASLFLGFHTLGLYVHNDVMLAFGTPEKQILIEPVFAQWIQSSHGKTLYGFDVLLSSSSSIALNAGKSLWLPGWLDAINNNSNSLFLTIGPGDFLVHHAIALGLHTTTLILVKGALDARGSKLMPDKKEFGFSFPCDGPGRGGTCDISAYDAFYLAVFWMLNTIGWVTFYWHWKHLGLWQGNVAQFNESSTYLMGWLRDYLWLNSSQLINGYNPFGMNSLSVWAWMFLFGHLVWATGFMFLISWRGYWQELIETLAWAHERTPLANLVRWKDKPVALSIVQARLVGLAHFSVGYIFTYAAFLIASTSGKFG.

8 consecutive transmembrane segments (helical) span residues 46 to 69 (IFAS…FHVA), 135 to 158 (LYTG…LHLQ), 175 to 199 (LNHH…HVAI), 273 to 291 (IAHH…GHMY), 330 to 353 (LHFQ…QHIY), 369 to 395 (AALY…IFFI), 417 to 439 (AIIS…LYVH), and 517 to 535 (FLVH…LILV). [4Fe-4S] cluster is bound by residues cysteine 559 and cysteine 568. 2 helical membrane passes run 575 to 596 (AFYL…YWHW) and 643 to 665 (LSVW…MFLI). Positions 654, 662, and 670 each coordinate chlorophyll a. Residue tryptophan 671 coordinates phylloquinone. The helical transmembrane segment at 707 to 727 (LVGLAHFSVGYIFTYAAFLIA) threads the bilayer.

Belongs to the PsaA/PsaB family. As to quaternary structure, the PsaA/B heterodimer binds the P700 chlorophyll special pair and subsequent electron acceptors. PSI consists of a core antenna complex that captures photons, and an electron transfer chain that converts photonic excitation into a charge separation. The eukaryotic PSI reaction center is composed of at least 11 subunits. P700 is a chlorophyll a/chlorophyll a' dimer, A0 is one or more chlorophyll a, A1 is one or both phylloquinones and FX is a shared 4Fe-4S iron-sulfur center. is required as a cofactor.

Its subcellular location is the plastid. The protein resides in the chloroplast thylakoid membrane. The enzyme catalyses reduced [plastocyanin] + hnu + oxidized [2Fe-2S]-[ferredoxin] = oxidized [plastocyanin] + reduced [2Fe-2S]-[ferredoxin]. In terms of biological role, psaA and PsaB bind P700, the primary electron donor of photosystem I (PSI), as well as the electron acceptors A0, A1 and FX. PSI is a plastocyanin-ferredoxin oxidoreductase, converting photonic excitation into a charge separation, which transfers an electron from the donor P700 chlorophyll pair to the spectroscopically characterized acceptors A0, A1, FX, FA and FB in turn. Oxidized P700 is reduced on the lumenal side of the thylakoid membrane by plastocyanin. This chain is Photosystem I P700 chlorophyll a apoprotein A2, found in Staurastrum punctulatum (Green alga).